We begin with the raw amino-acid sequence, 83 residues long: Small ribosomal subunit protein uS17 (83 aa).

It belongs to the universal ribosomal protein uS17 family. As to quaternary structure, part of the 30S ribosomal subunit.

In terms of biological role, one of the primary rRNA binding proteins, it binds specifically to the 5'-end of 16S ribosomal RNA. This Chlamydia abortus (strain DSM 27085 / S26/3) (Chlamydophila abortus) protein is Small ribosomal subunit protein uS17.